The sequence spans 476 residues: Major facilitator superfamily domain-containing protein 12 (476 aa).

M1 is modified (N-acetylmethionine). Over 1–25 the chain is Cytoplasmic; it reads MSPPSDDAGPGPPRTLSLAARLSFA. A helical membrane pass occupies residues 26 to 46; sequence VGHFLNDLCAGMWFTYLLLFL. At 47 to 55 the chain is on the lumenal side; sequence HSVRGYSSR. The helical transmembrane segment at 56-76 threads the bilayer; it reads GAGLLLLLGQVADGLCTPLVG. Residues 77 to 94 lie on the Cytoplasmic side of the membrane; the sequence is YEADRASCVRCGPRKAWH. The chain crosses the membrane as a helical span at residues 95 to 115; it reads LAGTVCVLLSFPFIFSPCLGC. The Lumenal segment spans residues 116–121; the sequence is GEATPE. The helical transmembrane segment at 122-142 threads the bilayer; it reads WAALLYYGPFIVVFQFGWAAT. Residues 143-167 lie on the Cytoplasmic side of the membrane; sequence QIAHLSLIPELVTSDHEKVELTALR. The chain crosses the membrane as a helical span at residues 168–188; that stretch reads YAFTVVANITVYGAAWLLLHL. Over 189 to 213 the chain is Lumenal; that stretch reads QGSAHGEQDISVGDQLGVQDVPVFR. A helical transmembrane segment spans residues 214-234; the sequence is NLALLVVGVGAIFSLLFHLGT. Over 235–284 the chain is Cytoplasmic; sequence KEGHRSQHWGNEPNEHTPLVAPAAQPLLLWKHWLREPAFYQVGMLYMTTR. Position 251 is a phosphothreonine (T251). Residues 285–305 traverse the membrane as a helical segment; that stretch reads LIVNLSQTYIAMYLTYSLSLP. Position 306 (K306) is a topological domain, lumenal. Residues 307–327 traverse the membrane as a helical segment; the sequence is KFIATIPLVMYLSGFFSSFLM. Topologically, residues 328–343 are cytoplasmic; that stretch reads KPVNRRIGRNMTYFTG. 2 consecutive transmembrane segments (helical) span residues 344-364 and 365-385; these read LLVILAFAAWVALADNLGVAV and YGAAVLLGAGCATILVTSLAM. The Cytoplasmic segment spans residues 386–398; that stretch reads TADLIGPHTHSGA. Residues 399 to 419 traverse the membrane as a helical segment; the sequence is FVYGAMSFSDKVANGLAVMAV. The Lumenal segment spans residues 420-444; sequence QSLHPCPSELCCGACISFYHWVMTA. Residues 445 to 465 traverse the membrane as a helical segment; it reads VTGGVGVAAALALCSLLIWPI. At 466–476 the chain is on the cytoplasmic side; that stretch reads RIRNRDPRDRP.

The protein belongs to the major facilitator superfamily. In terms of processing, phosphorylation at Thr-251 by MTOR via mTORC1 pathway promotes cysteine transport in lysosomes, thereby regulating lysosomal cysteine and cystine storage and redox homeostasis.

Its subcellular location is the melanosome membrane. The protein localises to the lysosome membrane. The catalysed reaction is L-cysteine(in) = L-cysteine(out). Transporter that mediates the import of cysteine into melanosomes, thereby regulating skin/hair pigmentation. In melanosomes, cysteine import is required both for normal levels of cystine, the oxidized dimer of cysteine, and provide cysteine for the production of the cysteinyldopas used in pheomelanin synthesis, thereby regulating skin/hair pigmentation. Also catalyzes import of cysteine into lysosomes in non-pigmented cells, regulating lysosomal cystine and cysteine storage, which is essnetial for redox homeostasis. The protein is Major facilitator superfamily domain-containing protein 12 of Mus musculus (Mouse).